A 184-amino-acid chain; its full sequence is Outer-membrane lipoprotein carrier protein (184 aa).

An N-terminal signal peptide occupies residues 1–19; the sequence is MKAFLKILMVLIFVSVAYA.

This sequence belongs to the LolA family. In terms of assembly, monomer.

The protein localises to the periplasm. Its function is as follows. Participates in the translocation of lipoproteins from the inner membrane to the outer membrane. Only forms a complex with a lipoprotein if the residue after the N-terminal Cys is not an aspartate (The Asp acts as a targeting signal to indicate that the lipoprotein should stay in the inner membrane). In Helicobacter pylori (strain P12), this protein is Outer-membrane lipoprotein carrier protein.